The sequence spans 245 residues: Collagen triple helix repeat-containing protein 1 (245 aa).

The first 32 residues, 1–32, serve as a signal peptide directing secretion; that stretch reads MHPQGRAAPPQLLLGLFLVLLLLLQLSAPISA. Residues 59–92 form the Collagen-like domain; that stretch reads QGPAGVPGRDGSPGANGIPGTPGIPGRDGFKGEK. The tract at residues 64–87 is disordered; the sequence is VPGRDGSPGANGIPGTPGIPGRDG. N-linked (GlcNAc...) asparagine glycosylation occurs at Asn188.

Post-translationally, N-glycosylated.

It localises to the secreted. It is found in the extracellular space. The protein resides in the extracellular matrix. In terms of biological role, may act as a negative regulator of collagen matrix deposition. The protein is Collagen triple helix repeat-containing protein 1 (Cthrc1) of Mus musculus (Mouse).